The chain runs to 208 residues: Potassium-transporting ATPase KdpC subunit (208 aa).

A helical membrane pass occupies residues proline 6–leucine 26.

This sequence belongs to the KdpC family. As to quaternary structure, the system is composed of three essential subunits: KdpA, KdpB and KdpC.

The protein resides in the cell membrane. Its function is as follows. Part of the high-affinity ATP-driven potassium transport (or Kdp) system, which catalyzes the hydrolysis of ATP coupled with the electrogenic transport of potassium into the cytoplasm. This subunit acts as a catalytic chaperone that increases the ATP-binding affinity of the ATP-hydrolyzing subunit KdpB by the formation of a transient KdpB/KdpC/ATP ternary complex. The polypeptide is Potassium-transporting ATPase KdpC subunit (Clostridioides difficile (strain 630) (Peptoclostridium difficile)).